The primary structure comprises 260 residues: Indole-3-glycerol phosphate synthase (260 aa).

Belongs to the TrpC family.

It carries out the reaction 1-(2-carboxyphenylamino)-1-deoxy-D-ribulose 5-phosphate + H(+) = (1S,2R)-1-C-(indol-3-yl)glycerol 3-phosphate + CO2 + H2O. Its pathway is amino-acid biosynthesis; L-tryptophan biosynthesis; L-tryptophan from chorismate: step 4/5. The protein is Indole-3-glycerol phosphate synthase of Desulfotalea psychrophila (strain LSv54 / DSM 12343).